Consider the following 343-residue polypeptide: UDP-3-O-acylglucosamine N-acyltransferase 2 (343 aa).

H251 (proton acceptor) is an active-site residue.

It belongs to the transferase hexapeptide repeat family. LpxD subfamily. Homotrimer.

The catalysed reaction is a UDP-3-O-[(3R)-3-hydroxyacyl]-alpha-D-glucosamine + a (3R)-hydroxyacyl-[ACP] = a UDP-2-N,3-O-bis[(3R)-3-hydroxyacyl]-alpha-D-glucosamine + holo-[ACP] + H(+). It functions in the pathway bacterial outer membrane biogenesis; LPS lipid A biosynthesis. Functionally, catalyzes the N-acylation of UDP-3-O-acylglucosamine using 3-hydroxyacyl-ACP as the acyl donor. Is involved in the biosynthesis of lipid A, a phosphorylated glycolipid that anchors the lipopolysaccharide to the outer membrane of the cell. The chain is UDP-3-O-acylglucosamine N-acyltransferase 2 from Legionella pneumophila (strain Lens).